Here is a 106-residue protein sequence, read N- to C-terminus: Protein translation factor SUI1 homolog (106 aa).

Belongs to the SUI1 family.

Functionally, additional factor that functions in concert with eIF-2 and the initiator tRNA in directing the ribosome to the proper start site of translation. The sequence is that of Protein translation factor SUI1 homolog from Acanthamoeba polyphaga mimivirus (APMV).